The chain runs to 339 residues: Phosphoribosylformylglycinamidine cyclo-ligase (339 aa).

This sequence belongs to the AIR synthase family.

The protein resides in the cytoplasm. It carries out the reaction 2-formamido-N(1)-(5-O-phospho-beta-D-ribosyl)acetamidine + ATP = 5-amino-1-(5-phospho-beta-D-ribosyl)imidazole + ADP + phosphate + H(+). Its pathway is purine metabolism; IMP biosynthesis via de novo pathway; 5-amino-1-(5-phospho-D-ribosyl)imidazole from N(2)-formyl-N(1)-(5-phospho-D-ribosyl)glycinamide: step 2/2. This is Phosphoribosylformylglycinamidine cyclo-ligase from Desulfitobacterium hafniense (strain DSM 10664 / DCB-2).